The chain runs to 189 residues: Ribosome maturation factor RimM (189 aa).

A PRC barrel domain is found at 96-169 (EDEFFQTDLI…TLLVEPYAAG (74 aa)). The tract at residues 170–189 (LIADDEDERPQNEKKKPKKS) is disordered.

This sequence belongs to the RimM family. In terms of assembly, binds ribosomal protein uS19.

It is found in the cytoplasm. An accessory protein needed during the final step in the assembly of 30S ribosomal subunit, possibly for assembly of the head region. Essential for efficient processing of 16S rRNA. May be needed both before and after RbfA during the maturation of 16S rRNA. It has affinity for free ribosomal 30S subunits but not for 70S ribosomes. The sequence is that of Ribosome maturation factor RimM from Brucella anthropi (strain ATCC 49188 / DSM 6882 / CCUG 24695 / JCM 21032 / LMG 3331 / NBRC 15819 / NCTC 12168 / Alc 37) (Ochrobactrum anthropi).